Reading from the N-terminus, the 518-residue chain is Zinc finger protein 449 (518 aa).

Residues 30-112 enclose the SCAN box domain; that stretch reads RQRFRQFQYR…SLIEDLQREL (83 aa). A compositionally biased stretch (polar residues) spans 292–304; it reads NPTLGETPENSNL. The tract at residues 292–325 is disordered; sequence NPTLGETPENSNLEEPLNPKPHKKKSPGEKPHRC. 7 C2H2-type zinc fingers span residues 323 to 345, 351 to 373, 379 to 401, 407 to 429, 435 to 457, 463 to 485, and 491 to 513; these read HRCP…QRIH, HKCP…QRLH, YECT…QRTH, YKCL…LKTH, HRCH…QRTH, FKCN…LRIH, and YKCT…QVTH.

Belongs to the krueppel C2H2-type zinc-finger protein family.

Its subcellular location is the nucleus. Its function is as follows. May be involved in transcriptional regulation. In Pan troglodytes (Chimpanzee), this protein is Zinc finger protein 449 (ZNF449).